The sequence spans 401 residues: Acetate kinase (401 aa).

Residue Asn7 coordinates Mg(2+). An ATP-binding site is contributed by Lys14. Arg91 lines the substrate pocket. The active-site Proton donor/acceptor is the Asp148. ATP is bound by residues 208-212 (HLGNG), 283-285 (DFR), and 332-336 (GVGEN). Residue Glu385 participates in Mg(2+) binding.

It belongs to the acetokinase family. Homodimer. Requires Mg(2+) as cofactor. It depends on Mn(2+) as a cofactor.

The protein resides in the cytoplasm. The enzyme catalyses acetate + ATP = acetyl phosphate + ADP. Its pathway is metabolic intermediate biosynthesis; acetyl-CoA biosynthesis; acetyl-CoA from acetate: step 1/2. In terms of biological role, catalyzes the formation of acetyl phosphate from acetate and ATP. Can also catalyze the reverse reaction. This chain is Acetate kinase, found in Caldanaerobacter subterraneus subsp. tengcongensis (strain DSM 15242 / JCM 11007 / NBRC 100824 / MB4) (Thermoanaerobacter tengcongensis).